Consider the following 546-residue polypeptide: Chaperonin GroEL (546 aa).

ATP contacts are provided by residues 30–33 (TLGP), Lys51, 87–91 (DGTTT), Gly415, and Asp496. The segment at 527-546 (EKKAPAGAPGGMGGMGDMDF) is disordered. The span at 534–546 (APGGMGGMGDMDF) shows a compositional bias: gly residues.

This sequence belongs to the chaperonin (HSP60) family. Forms a cylinder of 14 subunits composed of two heptameric rings stacked back-to-back. Interacts with the co-chaperonin GroES.

It localises to the cytoplasm. It catalyses the reaction ATP + H2O + a folded polypeptide = ADP + phosphate + an unfolded polypeptide.. Functionally, together with its co-chaperonin GroES, plays an essential role in assisting protein folding. The GroEL-GroES system forms a nano-cage that allows encapsulation of the non-native substrate proteins and provides a physical environment optimized to promote and accelerate protein folding. The polypeptide is Chaperonin GroEL (Rhodospirillum centenum (strain ATCC 51521 / SW)).